Consider the following 120-residue polypeptide: Spermidine export protein MdtJ (120 aa).

The next 4 helical transmembrane spans lie at Met-1 to Met-21, Thr-31 to Val-51, Ile-54 to Phe-74, and Glu-81 to Ile-101.

Belongs to the drug/metabolite transporter (DMT) superfamily. Small multidrug resistance (SMR) (TC 2.A.7.1) family. MdtJ subfamily. In terms of assembly, forms a complex with MdtI.

The protein localises to the cell inner membrane. Functionally, catalyzes the excretion of spermidine. The sequence is that of Spermidine export protein MdtJ from Enterobacter sp. (strain 638).